The chain runs to 135 residues: U-myrmeciitoxin(01)-Mg7a (135 aa).

The N-terminal stretch at 1–21 (MKLSCLSLALAIILLLAIVHS) is a signal peptide. The propeptide occupies 22-72 (PNMEVKALAGPEADAIGFADAFGEADAFGEADAFGEADAFGEADAFGEADA). A disordered region spans residues 69-95 (EADAKRSKSSSKTKPKKPKKPKKKIKI). The span at 75–93 (SKSSSKTKPKKPKKPKKKI) shows a compositional bias: basic residues. The O-linked (GalNAc...) serine glycan is linked to Ser120. Residues Thr129 and Thr130 are each glycosylated (O-linked (GalNAc...) threonine).

Belongs to the formicidae venom precursor-01 superfamily. In terms of processing, glycosylation is critical to maintaining the aqueous solubility of this protein, but does not directly contribute to its activity. In terms of tissue distribution, expressed by the venom gland.

The protein resides in the secreted. Its subcellular location is the target cell membrane. Neurotoxin that triggers pain behavior and inflammation in mammals, and is paralytic and lethal to insects. Causes a time-dependent increase in cell leak current. May act by targeting membranes. The sequence is that of U-myrmeciitoxin(01)-Mg7a from Myrmecia gulosa (Red bulldog ant).